The primary structure comprises 381 residues: Subtilisin E (381 aa).

Positions 1–29 (MRSKKLWISLLFALTLIFTMAFSNMSAQA) are cleaved as a signal peptide. Positions 30–106 (AGKSSTEKKY…VEEDHIAHEY (77 aa)) are excised as a propeptide. One can recognise an Inhibitor I9 domain in the interval 38 to 103 (KYIVGFKQTM…VAYVEEDHIA (66 aa)). Ca(2+) is bound at residue Q108. The Peptidase S8 domain maps to 111–380 (PYGISQIKAP…KGLINVQAAA (270 aa)). D138 serves as the catalytic Charge relay system. D147 is a binding site for Ca(2+). Catalysis depends on H170, which acts as the Charge relay system. Ca(2+) contacts are provided by L181, N183, I185, V187, A275, Y277, T280, and D303. S327 functions as the Charge relay system in the catalytic mechanism.

Belongs to the peptidase S8 family. It depends on Ca(2+) as a cofactor.

The protein localises to the secreted. It carries out the reaction Hydrolysis of proteins with broad specificity for peptide bonds, and a preference for a large uncharged residue in P1. Hydrolyzes peptide amides.. With respect to regulation, inhibited by PMSF (phenylmethylsulphonyl fluoride) and 3,4-dichloroisocoumarin but not by EDTA (shown for strain RT-5). Its function is as follows. An extracellular alkaline serine protease, it catalyzes the hydrolysis of proteins and peptide amides. This is Subtilisin E from Bacillus subtilis (strain 168).